The chain runs to 116 residues: Signal recognition particle 14 kDa protein (116 aa).

The protein belongs to the SRP14 family. As to quaternary structure, heterodimer with ZK512.4/SRP9; binds RNA as heterodimer. Component of a signal recognition particle (SRP) complex that consists of a 7SL RNA molecule of 300 nucleotides and six protein subunits: srpa-72, srpa-68, SRP54, F37F2.2/SRP19, F25G6.8/SRP14 and ZK512.4/SRP9.

Its subcellular location is the cytoplasm. In terms of biological role, component of the signal recognition particle (SRP) complex, a ribonucleoprotein complex that mediates the cotranslational targeting of secretory and membrane proteins to the endoplasmic reticulum (ER). F37F2.2/srpa-19 together with F25G6.8/srpa-14 and the Alu portion of the SRP RNA, constitutes the elongation arrest domain of SRP. The complex of F37F2.2/srpa-19 and F25G6.8/srpa-14 is required for SRP RNA binding. The protein is Signal recognition particle 14 kDa protein of Caenorhabditis elegans.